Reading from the N-terminus, the 243-residue chain is Myelin protein P0 (243 aa).

The first 26 residues, methionine 1–alanine 26, serve as a signal peptide directing secretion. The Ig-like V-type domain occupies isoleucine 27 to glutamine 141. Over isoleucine 27–leucine 154 the chain is Extracellular. Cysteine 47 and cysteine 123 form a disulfide bridge. An N-linked (GlcNAc...) asparagine glycan is attached at asparagine 118. Residues glycine 155–isoleucine 175 traverse the membrane as a helical segment. Topologically, residues arginine 176 to lysine 243 are cytoplasmic. A disordered region spans residues alanine 201–lysine 243. The segment covering threonine 222–lysine 243 has biased composition (basic and acidic residues).

The protein belongs to the myelin P0 protein family.

The protein localises to the cell membrane. Functionally, creation of an extracellular membrane face which guides the wrapping process and ultimately compacts adjacent lamellae. This is Myelin protein P0 (mpz) from Xenopus tropicalis (Western clawed frog).